The chain runs to 159 residues: Transcription elongation factor GreA (159 aa).

It belongs to the GreA/GreB family.

Necessary for efficient RNA polymerase transcription elongation past template-encoded arresting sites. The arresting sites in DNA have the property of trapping a certain fraction of elongating RNA polymerases that pass through, resulting in locked ternary complexes. Cleavage of the nascent transcript by cleavage factors such as GreA or GreB allows the resumption of elongation from the new 3'terminus. GreA releases sequences of 2 to 3 nucleotides. This is Transcription elongation factor GreA from Mycoplasmoides gallisepticum (strain R(low / passage 15 / clone 2)) (Mycoplasma gallisepticum).